A 300-amino-acid polypeptide reads, in one-letter code: Ribokinase (300 aa).

Residues 11 to 13 (SMD), 39 to 43 (GKGAN), and Glu139 each bind substrate. ATP is bound by residues Asn183 and 210–215 (TLGSEG). Asp236 and Thr238 together coordinate K(+). Residue 241-242 (GD) participates in ATP binding. Residue Asp242 coordinates substrate. Asp242 acts as the Proton acceptor in catalysis. K(+) contacts are provided by Ser272, Lys275, and Gly277.

Belongs to the carbohydrate kinase PfkB family. Ribokinase subfamily. As to quaternary structure, homodimer. The cofactor is Mg(2+).

It is found in the cytoplasm. It catalyses the reaction D-ribose + ATP = D-ribose 5-phosphate + ADP + H(+). The protein operates within carbohydrate metabolism; D-ribose degradation; D-ribose 5-phosphate from beta-D-ribopyranose: step 2/2. Its activity is regulated as follows. Activated by a monovalent cation that binds near, but not in, the active site. The most likely occupant of the site in vivo is potassium. Ion binding induces a conformational change that may alter substrate affinity. Its function is as follows. Catalyzes the phosphorylation of ribose at O-5 in a reaction requiring ATP and magnesium. The resulting D-ribose-5-phosphate can then be used either for sythesis of nucleotides, histidine, and tryptophan, or as a component of the pentose phosphate pathway. In Lactococcus lactis subsp. lactis (strain IL1403) (Streptococcus lactis), this protein is Ribokinase.